We begin with the raw amino-acid sequence, 241 residues long: Capsid protein (241 aa).

A Bipartite nuclear localization signal motif is present at residues 1 to 26 (MSPASSWKRKRPSSSSAQASKKRRVY). The disordered stretch occupies residues 1–30 (MSPASSWKRKRPSSSSAQASKKRRVYRPAV).

Belongs to the geminiviridae capsid protein family. In terms of assembly, homomultimer. Interacts with the movement protein. Binds to single-stranded and double-stranded viral DNA.

The protein localises to the virion. It is found in the host nucleus. Its function is as follows. Encapsidates the viral genome into characteristic twinned ('geminate') particles. Binds the genomic viral ssDNA and shuttles it into and out of the cell nucleus. Plays a role in protection of the genome from degradation, virus acquisition and transmission by insect vectors, infectivity, and systemic movement. The CP of monopartite geminiviruses is absolutely essential for virus movement. This is Capsid protein from Avena sativa (Oat).